Reading from the N-terminus, the 453-residue chain is Homogentisate 1,2-dioxygenase (453 aa).

His306 serves as the catalytic Proton acceptor. Residues His349 and Glu355 each contribute to the Fe cation site. Tyr364 and His385 together coordinate homogentisate. His385 lines the Fe cation pocket.

It belongs to the homogentisate dioxygenase family. Hexamer; dimer of trimers. Fe cation serves as cofactor.

The catalysed reaction is homogentisate + O2 = 4-maleylacetoacetate + H(+). It functions in the pathway amino-acid degradation; L-phenylalanine degradation; acetoacetate and fumarate from L-phenylalanine: step 4/6. In terms of biological role, involved in the catabolism of homogentisate (2,5-dihydroxyphenylacetate or 2,5-OH-PhAc), a central intermediate in the degradation of phenylalanine and tyrosine. Catalyzes the oxidative ring cleavage of the aromatic ring of homogentisate to yield maleylacetoacetate. The protein is Homogentisate 1,2-dioxygenase of Rhizobium etli (strain CIAT 652).